Reading from the N-terminus, the 248-residue chain is DNA repair protein RecO (248 aa).

This sequence belongs to the RecO family.

Functionally, involved in DNA repair and RecF pathway recombination. The chain is DNA repair protein RecO from Bradyrhizobium sp. (strain BTAi1 / ATCC BAA-1182).